The sequence spans 478 residues: Sialidase-4 (478 aa).

An FRIP motif motif is present at residues tyrosine 22–proline 25. Residues arginine 23 and arginine 43 each coordinate substrate. Active-site proton acceptor residues include aspartate 47 and aspartate 48. A BNR 1 repeat occupies valine 127–serine 138. Tyrosine 177 and tyrosine 179 together coordinate substrate. One copy of the BNR 2 repeat lies at phenylalanine 200–cysteine 211. Substrate-binding residues include glutamate 222 and arginine 238. A BNR 3 repeat occupies alanine 247–proline 258. 2 disordered regions span residues isoleucine 285–leucine 307 and serine 335–proline 359. Arginine 383 lines the substrate pocket. The active-site Nucleophile is tyrosine 413. Glutamate 434 is an active-site residue.

It belongs to the glycosyl hydrolase 33 family. As to expression, highly expressed in brain, particularly in hippocampus, and at lower levels in liver and spleen. Expressed in hippocampal neurons (at protein level).

The protein resides in the cell membrane. It localises to the endoplasmic reticulum membrane. It is found in the microsome membrane. Its subcellular location is the mitochondrion inner membrane. The protein localises to the mitochondrion outer membrane. The protein resides in the cell projection. It localises to the neuron projection. It is found in the lysosome lumen. It catalyses the reaction Hydrolysis of alpha-(2-&gt;3)-, alpha-(2-&gt;6)-, alpha-(2-&gt;8)- glycosidic linkages of terminal sialic acid residues in oligosaccharides, glycoproteins, glycolipids, colominic acid and synthetic substrates.. It carries out the reaction a ganglioside GM3 + H2O = a beta-D-galactosyl-(1-&gt;4)-beta-D-glucosyl-(1&lt;-&gt;1)-ceramide + N-acetylneuraminate. The enzyme catalyses a ganglioside GM3 (d18:1(4E)) + H2O = a beta-D-Gal-(1-&gt;4)-beta-D-Glc-(1&lt;-&gt;1)-Cer(d18:1(4E)) + N-acetylneuraminate. The catalysed reaction is a ganglioside GM2 + H2O = a ganglioside GA2 + N-acetylneuraminate. It catalyses the reaction a ganglioside GM2 (d18:1(4E)) + H2O = a ganglioside GA2 (d18:1(4E)) + N-acetylneuraminate. It carries out the reaction a ganglioside GD1a + H2O = a ganglioside GM1 + N-acetylneuraminate. The enzyme catalyses a ganglioside GD1a (d18:1(4E)) + H2O = a ganglioside GM1 (d18:1(4E)) + N-acetylneuraminate. The catalysed reaction is a ganglioside GD3 + H2O = a ganglioside GM3 + N-acetylneuraminate. It catalyses the reaction a ganglioside GD3 (d18:1(4E)) + H2O = a ganglioside GM3 (d18:1(4E)) + N-acetylneuraminate. Functionally, exo-alpha-sialidase that catalyzes the hydrolytic cleavage of the terminal sialic acid (N-acetylneuraminic acid, Neu5Ac) of a glycan moiety in the catabolism of glycolipids, glycoproteins and oligosacharides. Efficiently hydrolyzes gangliosides including alpha-(2-&gt;3)-sialylated GD1a and GM3 and alpha-(2-&gt;8)-sialylated GD3. Hydrolyzes poly-alpha-(2-&gt;8)-sialylated neural cell adhesion molecule NCAM1 likely at growth cones, suppressing neurite outgrowth in hippocampal neurons. May desialylate sialyl Lewis A and X antigens at the cell surface, down-regulating these glycan epitopes recognized by SELE/E selectin in the initiation of cell adhesion and extravasation. Has sialidase activity toward mucin, fetuin and sialyllactose. The sequence is that of Sialidase-4 (Neu4) from Mus musculus (Mouse).